Reading from the N-terminus, the 603-residue chain is Elongation factor 4 (603 aa).

In terms of domain architecture, tr-type G spans 6-188 (AHIRNFCIIA…SVVQNVPPPS (183 aa)). GTP contacts are provided by residues 18-23 (DHGKST) and 135-138 (NKID).

The protein belongs to the TRAFAC class translation factor GTPase superfamily. Classic translation factor GTPase family. LepA subfamily.

It is found in the cell inner membrane. It carries out the reaction GTP + H2O = GDP + phosphate + H(+). Functionally, required for accurate and efficient protein synthesis under certain stress conditions. May act as a fidelity factor of the translation reaction, by catalyzing a one-codon backward translocation of tRNAs on improperly translocated ribosomes. Back-translocation proceeds from a post-translocation (POST) complex to a pre-translocation (PRE) complex, thus giving elongation factor G a second chance to translocate the tRNAs correctly. Binds to ribosomes in a GTP-dependent manner. This is Elongation factor 4 from Myxococcus xanthus (strain DK1622).